We begin with the raw amino-acid sequence, 333 residues long: Foldase protein PrsA (333 aa).

The signal sequence occupies residues 1–22 (MKSAKQIATALLVGMFTFSAVG). Cysteine 23 is lipidated: N-palmitoyl cysteine. A lipid anchor (S-diacylglycerol cysteine) is attached at cysteine 23. One can recognise a PpiC domain in the interval 192-283 (PNTVHLAHIL…FGWHVIKCIK (92 aa)).

It belongs to the PrsA family.

The protein resides in the cell membrane. It catalyses the reaction [protein]-peptidylproline (omega=180) = [protein]-peptidylproline (omega=0). In terms of biological role, plays a major role in protein secretion by helping the post-translocational extracellular folding of several secreted proteins. The polypeptide is Foldase protein PrsA (Clostridium acetobutylicum (strain ATCC 824 / DSM 792 / JCM 1419 / IAM 19013 / LMG 5710 / NBRC 13948 / NRRL B-527 / VKM B-1787 / 2291 / W)).